Reading from the N-terminus, the 38-residue chain is Large ribosomal subunit protein bL36B (38 aa).

Belongs to the bacterial ribosomal protein bL36 family.

In Prochlorococcus marinus (strain MIT 9515), this protein is Large ribosomal subunit protein bL36B.